Reading from the N-terminus, the 147-residue chain is 3-hydroxyacyl-[acyl-carrier-protein] dehydratase FabZ (147 aa).

His-48 is an active-site residue.

It belongs to the thioester dehydratase family. FabZ subfamily.

The protein resides in the cytoplasm. The enzyme catalyses a (3R)-hydroxyacyl-[ACP] = a (2E)-enoyl-[ACP] + H2O. Functionally, involved in unsaturated fatty acids biosynthesis. Catalyzes the dehydration of short chain beta-hydroxyacyl-ACPs and long chain saturated and unsaturated beta-hydroxyacyl-ACPs. The polypeptide is 3-hydroxyacyl-[acyl-carrier-protein] dehydratase FabZ (Aliarcobacter butzleri (strain RM4018) (Arcobacter butzleri)).